Here is a 434-residue protein sequence, read N- to C-terminus: Na(+)/H(+) antiporter NhaA 1 (434 aa).

Transmembrane regions (helical) follow at residues 30 to 50, 70 to 90, 108 to 128, 141 to 161, 172 to 192, 195 to 215, 286 to 306, 318 to 338, 354 to 374, and 386 to 406; these read TGGLLLLVFTVIALVWANVAG, LSIEHWAADGLLAIFFFVTGL, ALPIAAAVGGMAVPALLFVLV, VGWATPTATDIAFALGILAVV, FLLTLAVVDDLLGITVIAIFY, QVHWTPLLLALLTLAAFTVAV, FAVPVFALFSAGVAIGGVSGF, VIAGLVLGKPIGIVGTTWLLA, VLGMAMLAGMGFTVSLLIGSL, and VTLGVLVGSLLSAVLAAVVLS.

Belongs to the NhaA Na(+)/H(+) (TC 2.A.33) antiporter family.

The protein localises to the cell membrane. It catalyses the reaction Na(+)(in) + 2 H(+)(out) = Na(+)(out) + 2 H(+)(in). Na(+)/H(+) antiporter that extrudes sodium in exchange for external protons. This chain is Na(+)/H(+) antiporter NhaA 1, found in Kineococcus radiotolerans (strain ATCC BAA-149 / DSM 14245 / SRS30216).